The sequence spans 113 residues: Large ribosomal subunit protein bL17 (113 aa).

This sequence belongs to the bacterial ribosomal protein bL17 family. In terms of assembly, part of the 50S ribosomal subunit. Contacts protein L32.

The chain is Large ribosomal subunit protein bL17 from Clostridium botulinum (strain Alaska E43 / Type E3).